The sequence spans 317 residues: Glycine--tRNA ligase alpha subunit (317 aa).

The protein belongs to the class-II aminoacyl-tRNA synthetase family. As to quaternary structure, tetramer of two alpha and two beta subunits.

The protein resides in the cytoplasm. The catalysed reaction is tRNA(Gly) + glycine + ATP = glycyl-tRNA(Gly) + AMP + diphosphate. The sequence is that of Glycine--tRNA ligase alpha subunit from Pseudomonas fluorescens (strain ATCC BAA-477 / NRRL B-23932 / Pf-5).